The following is a 175-amino-acid chain: NADH-quinone oxidoreductase subunit I (175 aa).

2 4Fe-4S ferredoxin-type domains span residues 69 to 98 (KRDE…IEAA) and 115 to 144 (KKFE…LDGT). Residues cysteine 78, cysteine 81, cysteine 84, cysteine 88, cysteine 124, cysteine 127, cysteine 130, and cysteine 134 each contribute to the [4Fe-4S] cluster site.

It belongs to the complex I 23 kDa subunit family. In terms of assembly, NDH-1 is composed of 14 different subunits. Subunits NuoA, H, J, K, L, M, N constitute the membrane sector of the complex. Requires [4Fe-4S] cluster as cofactor.

The protein localises to the cell inner membrane. The catalysed reaction is a quinone + NADH + 5 H(+)(in) = a quinol + NAD(+) + 4 H(+)(out). In terms of biological role, NDH-1 shuttles electrons from NADH, via FMN and iron-sulfur (Fe-S) centers, to quinones in the respiratory chain. The immediate electron acceptor for the enzyme in this species is believed to be ubiquinone. Couples the redox reaction to proton translocation (for every two electrons transferred, four hydrogen ions are translocated across the cytoplasmic membrane), and thus conserves the redox energy in a proton gradient. In Leptospira biflexa serovar Patoc (strain Patoc 1 / Ames), this protein is NADH-quinone oxidoreductase subunit I.